A 151-amino-acid polypeptide reads, in one-letter code: SsrA-binding protein (151 aa).

Belongs to the SmpB family.

It is found in the cytoplasm. In terms of biological role, required for rescue of stalled ribosomes mediated by trans-translation. Binds to transfer-messenger RNA (tmRNA), required for stable association of tmRNA with ribosomes. tmRNA and SmpB together mimic tRNA shape, replacing the anticodon stem-loop with SmpB. tmRNA is encoded by the ssrA gene; the 2 termini fold to resemble tRNA(Ala) and it encodes a 'tag peptide', a short internal open reading frame. During trans-translation Ala-aminoacylated tmRNA acts like a tRNA, entering the A-site of stalled ribosomes, displacing the stalled mRNA. The ribosome then switches to translate the ORF on the tmRNA; the nascent peptide is terminated with the 'tag peptide' encoded by the tmRNA and targeted for degradation. The ribosome is freed to recommence translation, which seems to be the essential function of trans-translation. This is SsrA-binding protein from Chlamydia trachomatis serovar A (strain ATCC VR-571B / DSM 19440 / HAR-13).